A 1433-amino-acid chain; its full sequence is DNA-directed RNA polymerase subunit beta' (1433 aa).

Zn(2+) contacts are provided by C66, C68, C81, and C84. Positions 473, 475, and 477 each coordinate Mg(2+). Zn(2+)-binding residues include C815, C889, C896, and C899.

Belongs to the RNA polymerase beta' chain family. In terms of assembly, the RNAP catalytic core consists of 2 alpha, 1 beta, 1 beta' and 1 omega subunit. When a sigma factor is associated with the core the holoenzyme is formed, which can initiate transcription. Mg(2+) serves as cofactor. Requires Zn(2+) as cofactor.

The enzyme catalyses RNA(n) + a ribonucleoside 5'-triphosphate = RNA(n+1) + diphosphate. Functionally, DNA-dependent RNA polymerase catalyzes the transcription of DNA into RNA using the four ribonucleoside triphosphates as substrates. This chain is DNA-directed RNA polymerase subunit beta', found in Porphyromonas gingivalis (strain ATCC BAA-308 / W83).